The chain runs to 29 residues: uncharacterized protein (29 aa).

A helical membrane pass occupies residues 8 to 28; it reads FALIVVLFILLIIVGTAFVGG.

Belongs to the SscA family.

The protein resides in the membrane. This is an uncharacterized protein from Bacillus subtilis (strain 168).